Consider the following 451-residue polypeptide: tRNA modification GTPase MnmE (451 aa).

Residues Arg25, Glu87, and Arg127 each coordinate (6S)-5-formyl-5,6,7,8-tetrahydrofolate. Positions 222–374 constitute a TrmE-type G domain; the sequence is GLRVALVGRP…FVQVLLERCG (153 aa). Asn232 serves as a coordination point for K(+). Residues 232–237, 251–257, and 276–279 each bind GTP; these read NVGKSS, TELPGTT, and DTAG. Mg(2+) is bound at residue Ser236. K(+) contacts are provided by Thr251, Leu253, and Thr256. Thr257 serves as a coordination point for Mg(2+). Lys451 is a binding site for (6S)-5-formyl-5,6,7,8-tetrahydrofolate.

Belongs to the TRAFAC class TrmE-Era-EngA-EngB-Septin-like GTPase superfamily. TrmE GTPase family. As to quaternary structure, homodimer. Heterotetramer of two MnmE and two MnmG subunits. It depends on K(+) as a cofactor.

It localises to the cytoplasm. Its function is as follows. Exhibits a very high intrinsic GTPase hydrolysis rate. Involved in the addition of a carboxymethylaminomethyl (cmnm) group at the wobble position (U34) of certain tRNAs, forming tRNA-cmnm(5)s(2)U34. The sequence is that of tRNA modification GTPase MnmE from Synechococcus sp. (strain CC9902).